The chain runs to 1088 residues: DNA damage-binding protein 1b (1088 aa).

The protein belongs to the DDB1 family. As to quaternary structure, interacts with DDA1. Binds to KTN80.2/DWA3. Interacts with HTD1.

It localises to the nucleus. The protein operates within protein modification; protein ubiquitination. Functionally, component of light signal transduction machinery. Involved in repression of photomorphogenesis in darkness. Plays a role in DNA repair by forming with DDB2 the UV-damaged DNA-binding protein complex (UV-DDB). In Arabidopsis thaliana (Mouse-ear cress), this protein is DNA damage-binding protein 1b.